Reading from the N-terminus, the 325-residue chain is L-lactate dehydrogenase 1 (325 aa).

Residues Val17, Asp38, Lys43, Tyr68, and 82–83 (GA) contribute to the NAD(+) site. Substrate contacts are provided by residues Gln85, Arg91, and 123-126 (NPVD). NAD(+) is bound by residues 121 to 123 (AAN) and Ser146. 151–154 (DTAR) is a substrate binding site. Residues Arg156 and His171 each coordinate beta-D-fructose 1,6-bisphosphate. His178 acts as the Proton acceptor in catalysis. A Phosphotyrosine modification is found at Tyr223. Thr232 is a substrate binding site.

This sequence belongs to the LDH/MDH superfamily. LDH family. Homotetramer.

It is found in the cytoplasm. It carries out the reaction (S)-lactate + NAD(+) = pyruvate + NADH + H(+). Its pathway is fermentation; pyruvate fermentation to lactate; (S)-lactate from pyruvate: step 1/1. With respect to regulation, allosterically activated by fructose 1,6-bisphosphate (FBP). In terms of biological role, catalyzes the conversion of lactate to pyruvate. The sequence is that of L-lactate dehydrogenase 1 from Lactococcus lactis subsp. cremoris (Streptococcus cremoris).